The primary structure comprises 793 residues: WASP homolog-associated protein with actin, membranes and microtubules (793 aa).

The tract at residues 1–253 (MDSEQPDSLD…EVATSCKLGI (253 aa)) is mediates association with membranes. The tract at residues 254 to 623 (LKSLDEDELG…FVPVSDQTLS (370 aa)) is mediates interaction with microtubules. 2 coiled-coil regions span residues 265–290 (RRVA…SIQD) and 445–503 (LGDN…LHQH). 2 disordered regions span residues 556–661 (SMVS…SFQG) and 675–699 (EDRP…PGSM). Basic residues predominate over residues 566-579 (SQKRLSTAHHHKTA). Residues 618 to 628 (SDQTLSGSSED) are compositionally biased toward polar residues. The tract at residues 624-793 (GSSEDLSLPP…DEPSPTEWDR (170 aa)) is mediates actin nucleation. Over residues 632–654 (PPQPPAPPLPPPPPPPPPPPLPP) the composition is skewed to pro residues. WH2 domains lie at 698-716 (SMDE…LRKV) and 728-745 (VNEQ…LKKV). A coiled-coil region spans residues 755 to 785 (KKSTSDLERSIREALERIKKVSADSEEDNDE). Positions 772 to 793 (IKKVSADSEEDNDEPSPTEWDR) are disordered. Positions 778-787 (DSEEDNDEPS) are enriched in acidic residues. Ser779 is subject to Phosphoserine.

As to quaternary structure, interacts with ACTR3; indicative for an association with the ARP2/3 complex. Associates with microtubules; in vitro binds to tubulin heterodimer in a 1:1 stoichiometry; decorates microtubules with a repeat of 80 A along protofilaments. Interacts with RHOD (in GTP-bound form).

It is found in the cytoplasm. The protein resides in the endoplasmic reticulum-Golgi intermediate compartment. The protein localises to the cytoplasmic vesicle membrane. Its subcellular location is the golgi apparatus. It localises to the cis-Golgi network. Acts as a nucleation-promoting factor (NPF) that stimulates Arp2/3-mediated actin polymerization both at the Golgi apparatus and along tubular membranes. Involved as a regulator of Golgi positioning and morphology. Its activity in membrane tubulation requires F-actin and interaction with microtubules. Proposed to use coordinated actin-nucleating and microtubule-binding activities of distinct WHAMM molecules to drive membrane tubule elongation; when MT-bound can recruit and remodel membrane vesicles but is prevented to activate the Arp2/3 complex. Required for RhoD-dependent actin reorganization such as in cell adhesion and cell migration. Participates in vesicle transport between the endoplasmic reticulum and the Golgi complex. This Mus musculus (Mouse) protein is WASP homolog-associated protein with actin, membranes and microtubules (Whamm).